We begin with the raw amino-acid sequence, 249 residues long: tRNA (guanine-N(1)-)-methyltransferase (249 aa).

S-adenosyl-L-methionine contacts are provided by residues Gly-118 and 138-143 (IGDYVL).

Belongs to the RNA methyltransferase TrmD family. Homodimer.

The protein resides in the cytoplasm. The enzyme catalyses guanosine(37) in tRNA + S-adenosyl-L-methionine = N(1)-methylguanosine(37) in tRNA + S-adenosyl-L-homocysteine + H(+). Its function is as follows. Specifically methylates guanosine-37 in various tRNAs. The chain is tRNA (guanine-N(1)-)-methyltransferase from Alkaliphilus oremlandii (strain OhILAs) (Clostridium oremlandii (strain OhILAs)).